Reading from the N-terminus, the 156-residue chain is S-ribosylhomocysteine lyase (156 aa).

His-54, His-58, and Cys-123 together coordinate Fe cation.

Belongs to the LuxS family. As to quaternary structure, homodimer. The cofactor is Fe cation.

The enzyme catalyses S-(5-deoxy-D-ribos-5-yl)-L-homocysteine = (S)-4,5-dihydroxypentane-2,3-dione + L-homocysteine. In terms of biological role, involved in the synthesis of autoinducer 2 (AI-2) which is secreted by bacteria and is used to communicate both the cell density and the metabolic potential of the environment. The regulation of gene expression in response to changes in cell density is called quorum sensing. Catalyzes the transformation of S-ribosylhomocysteine (RHC) to homocysteine (HC) and 4,5-dihydroxy-2,3-pentadione (DPD). The chain is S-ribosylhomocysteine lyase from Ligilactobacillus salivarius (strain UCC118) (Lactobacillus salivarius).